The sequence spans 462 residues: Glutamate-1-semialdehyde 2,1-aminomutase (462 aa).

The tract at residues 178-200 (DDPQRPASPRSQSSRGLPSSPGV) is disordered. A compositionally biased stretch (low complexity) spans 182-192 (RPASPRSQSSR). The residue at position 297 (lysine 297) is an N6-(pyridoxal phosphate)lysine.

Belongs to the class-III pyridoxal-phosphate-dependent aminotransferase family. HemL subfamily. As to quaternary structure, homodimer. Pyridoxal 5'-phosphate is required as a cofactor.

It is found in the cytoplasm. It catalyses the reaction (S)-4-amino-5-oxopentanoate = 5-aminolevulinate. It functions in the pathway porphyrin-containing compound metabolism; protoporphyrin-IX biosynthesis; 5-aminolevulinate from L-glutamyl-tRNA(Glu): step 2/2. In Mycobacterium bovis (strain ATCC BAA-935 / AF2122/97), this protein is Glutamate-1-semialdehyde 2,1-aminomutase (hemL).